A 243-amino-acid chain; its full sequence is Orotidine 5'-phosphate decarboxylase (243 aa).

Residues aspartate 19, lysine 41, 69–78 (DLKFFDIPAT), threonine 124, arginine 185, glutamine 194, glycine 214, and arginine 215 contribute to the substrate site. Catalysis depends on lysine 71, which acts as the Proton donor.

It belongs to the OMP decarboxylase family. Type 1 subfamily. Homodimer.

The catalysed reaction is orotidine 5'-phosphate + H(+) = UMP + CO2. It participates in pyrimidine metabolism; UMP biosynthesis via de novo pathway; UMP from orotate: step 2/2. Its function is as follows. Catalyzes the decarboxylation of orotidine 5'-monophosphate (OMP) to uridine 5'-monophosphate (UMP). The chain is Orotidine 5'-phosphate decarboxylase from Xanthomonas axonopodis pv. citri (strain 306).